The primary structure comprises 714 residues: Fatty acid oxidation complex subunit alpha (714 aa).

The enoyl-CoA hydratase stretch occupies residues 1-190 (MEMASAFTLN…KLGLVDDVVP (190 aa)). The tract at residues 306–714 (APLNSVGILG…FWKTTATDLQ (409 aa)) is 3-hydroxyacyl-CoA dehydrogenase.

The protein in the N-terminal section; belongs to the enoyl-CoA hydratase/isomerase family. In the central section; belongs to the 3-hydroxyacyl-CoA dehydrogenase family. In terms of assembly, heterotetramer of two alpha chains (FadJ) and two beta chains (FadI).

Its subcellular location is the cytoplasm. It catalyses the reaction a (3S)-3-hydroxyacyl-CoA = a (2E)-enoyl-CoA + H2O. The catalysed reaction is a 4-saturated-(3S)-3-hydroxyacyl-CoA = a (3E)-enoyl-CoA + H2O. The enzyme catalyses a (3S)-3-hydroxyacyl-CoA + NAD(+) = a 3-oxoacyl-CoA + NADH + H(+). It carries out the reaction (3S)-3-hydroxybutanoyl-CoA = (3R)-3-hydroxybutanoyl-CoA. It participates in lipid metabolism; fatty acid beta-oxidation. Its function is as follows. Catalyzes the formation of a hydroxyacyl-CoA by addition of water on enoyl-CoA. Also exhibits 3-hydroxyacyl-CoA epimerase and 3-hydroxyacyl-CoA dehydrogenase activities. The protein is Fatty acid oxidation complex subunit alpha of Shigella boydii serotype 18 (strain CDC 3083-94 / BS512).